A 227-amino-acid polypeptide reads, in one-letter code: MKFAVIVFPGSNCDLDMYHAVKDALGEEVEYVFHTETSLEGYDGVLLPGGFSYGDYLRCGAIAQFSPIMEEVKRFAAEGKTVLGVCNGFQILVEAGLLPGVLHRNTGLKFMCRTVELKVENNETRFTSDYAAQETITIPIAHGEGNYYCDDATYAMLQTNRQIAFTYTDNPNGSRGDIAGITNKAGNVLGMMPHPERAVELLTGGTDGLKLFTSLVKQGAHHVKTTV.

In terms of domain architecture, Glutamine amidotransferase type-1 spans 3–225; sequence FAVIVFPGSN…VKQGAHHVKT (223 aa). Catalysis depends on C86, which acts as the Nucleophile. Residues H194 and E196 contribute to the active site.

Part of the FGAM synthase complex composed of 1 PurL, 1 PurQ and 2 PurS subunits.

It is found in the cytoplasm. It catalyses the reaction N(2)-formyl-N(1)-(5-phospho-beta-D-ribosyl)glycinamide + L-glutamine + ATP + H2O = 2-formamido-N(1)-(5-O-phospho-beta-D-ribosyl)acetamidine + L-glutamate + ADP + phosphate + H(+). It carries out the reaction L-glutamine + H2O = L-glutamate + NH4(+). It participates in purine metabolism; IMP biosynthesis via de novo pathway; 5-amino-1-(5-phospho-D-ribosyl)imidazole from N(2)-formyl-N(1)-(5-phospho-D-ribosyl)glycinamide: step 1/2. Functionally, part of the phosphoribosylformylglycinamidine synthase complex involved in the purines biosynthetic pathway. Catalyzes the ATP-dependent conversion of formylglycinamide ribonucleotide (FGAR) and glutamine to yield formylglycinamidine ribonucleotide (FGAM) and glutamate. The FGAM synthase complex is composed of three subunits. PurQ produces an ammonia molecule by converting glutamine to glutamate. PurL transfers the ammonia molecule to FGAR to form FGAM in an ATP-dependent manner. PurS interacts with PurQ and PurL and is thought to assist in the transfer of the ammonia molecule from PurQ to PurL. This Exiguobacterium sibiricum (strain DSM 17290 / CCUG 55495 / CIP 109462 / JCM 13490 / 255-15) protein is Phosphoribosylformylglycinamidine synthase subunit PurQ.